A 216-amino-acid polypeptide reads, in one-letter code: Protein-L-isoaspartate O-methyltransferase 1 (216 aa).

Ser60 is a catalytic residue.

Belongs to the methyltransferase superfamily. L-isoaspartyl/D-aspartyl protein methyltransferase family.

The protein localises to the cytoplasm. The catalysed reaction is [protein]-L-isoaspartate + S-adenosyl-L-methionine = [protein]-L-isoaspartate alpha-methyl ester + S-adenosyl-L-homocysteine. Functionally, catalyzes the methyl esterification of L-isoaspartyl residues in peptides and proteins that result from spontaneous decomposition of normal L-aspartyl and L-asparaginyl residues. It plays a role in the repair and/or degradation of damaged proteins. The polypeptide is Protein-L-isoaspartate O-methyltransferase 1 (pcm1) (Archaeoglobus fulgidus (strain ATCC 49558 / DSM 4304 / JCM 9628 / NBRC 100126 / VC-16)).